A 189-amino-acid polypeptide reads, in one-letter code: Nucleoside triphosphate pyrophosphatase (189 aa).

Residue D70 is the Proton acceptor of the active site.

The protein belongs to the Maf family. A divalent metal cation serves as cofactor.

It localises to the cytoplasm. It carries out the reaction a ribonucleoside 5'-triphosphate + H2O = a ribonucleoside 5'-phosphate + diphosphate + H(+). The enzyme catalyses a 2'-deoxyribonucleoside 5'-triphosphate + H2O = a 2'-deoxyribonucleoside 5'-phosphate + diphosphate + H(+). Its function is as follows. Nucleoside triphosphate pyrophosphatase. May have a dual role in cell division arrest and in preventing the incorporation of modified nucleotides into cellular nucleic acids. The polypeptide is Nucleoside triphosphate pyrophosphatase (Xylella fastidiosa (strain M23)).